Consider the following 508-residue polypeptide: Photosystem II CP47 reaction center protein (508 aa).

The next 6 membrane-spanning stretches (helical) occupy residues 21–36 (SVHI…WAGS), 101–115 (IVFS…IWHW), 140–156 (GIHL…FGAF), 203–218 (IAAG…FHLS), 237–252 (VLSS…AFVV), and 457–472 (SFAL…HGAR).

Belongs to the PsbB/PsbC family. PsbB subfamily. As to quaternary structure, PSII is composed of 1 copy each of membrane proteins PsbA, PsbB, PsbC, PsbD, PsbE, PsbF, PsbH, PsbI, PsbJ, PsbK, PsbL, PsbM, PsbT, PsbX, PsbY, PsbZ, Psb30/Ycf12, at least 3 peripheral proteins of the oxygen-evolving complex and a large number of cofactors. It forms dimeric complexes. Requires Binds multiple chlorophylls. PSII binds additional chlorophylls, carotenoids and specific lipids. as cofactor.

Its subcellular location is the plastid. It localises to the chloroplast thylakoid membrane. One of the components of the core complex of photosystem II (PSII). It binds chlorophyll and helps catalyze the primary light-induced photochemical processes of PSII. PSII is a light-driven water:plastoquinone oxidoreductase, using light energy to abstract electrons from H(2)O, generating O(2) and a proton gradient subsequently used for ATP formation. This chain is Photosystem II CP47 reaction center protein, found in Nuphar advena (Common spatterdock).